The sequence spans 366 residues: Spermidine/putrescine import ATP-binding protein PotA (366 aa).

Residues 14-247 (ISARALRKVY…PADRFVADFI (234 aa)) form the ABC transporter domain. 49–56 (GPSGCGKT) lines the ATP pocket.

Belongs to the ABC transporter superfamily. Spermidine/putrescine importer (TC 3.A.1.11.1) family. In terms of assembly, the complex is composed of two ATP-binding proteins (PotA), two transmembrane proteins (PotB and PotC) and a solute-binding protein (PotD).

It localises to the cell inner membrane. The enzyme catalyses ATP + H2O + polyamine-[polyamine-binding protein]Side 1 = ADP + phosphate + polyamineSide 2 + [polyamine-binding protein]Side 1.. In terms of biological role, part of the ABC transporter complex PotABCD involved in spermidine/putrescine import. Responsible for energy coupling to the transport system. This is Spermidine/putrescine import ATP-binding protein PotA from Ruegeria pomeroyi (strain ATCC 700808 / DSM 15171 / DSS-3) (Silicibacter pomeroyi).